The primary structure comprises 210 residues: HTH-type transcriptional repressor ComR (210 aa).

The HTH tetR-type domain maps to 18 to 78 (VFDRDAALDK…AVLDRYIDRF (61 aa)). The segment at residues 41-60 (SLADLVEATGAKAPTLYAEF) is a DNA-binding region (H-T-H motif).

With respect to regulation, binding to the promoter region of BhsA/ComC is released in the presence of copper. Represses expression of BhsA/ComC by binding to its promoter region in the absence of copper. The polypeptide is HTH-type transcriptional repressor ComR (comR) (Escherichia coli (strain K12)).